Consider the following 171-residue polypeptide: Phosphopantetheine adenylyltransferase (171 aa).

Thr-10 lines the substrate pocket. ATP is bound by residues 10-11 (TF) and His-18. Substrate is bound by residues Lys-42, Thr-74, and Arg-88. ATP is bound by residues 89-91 (GLR), Glu-99, and 124-130 (WACLSSK).

It belongs to the bacterial CoaD family. In terms of assembly, homohexamer. Mg(2+) is required as a cofactor.

It localises to the cytoplasm. It carries out the reaction (R)-4'-phosphopantetheine + ATP + H(+) = 3'-dephospho-CoA + diphosphate. The protein operates within cofactor biosynthesis; coenzyme A biosynthesis; CoA from (R)-pantothenate: step 4/5. Functionally, reversibly transfers an adenylyl group from ATP to 4'-phosphopantetheine, yielding dephospho-CoA (dPCoA) and pyrophosphate. The protein is Phosphopantetheine adenylyltransferase of Blochmanniella pennsylvanica (strain BPEN).